We begin with the raw amino-acid sequence, 198 residues long: Thymidylate kinase (198 aa).

Gly-10–Thr-17 lines the ATP pocket.

This sequence belongs to the thymidylate kinase family.

The enzyme catalyses dTMP + ATP = dTDP + ADP. Functionally, phosphorylation of dTMP to form dTDP in both de novo and salvage pathways of dTTP synthesis. The protein is Thymidylate kinase of Thermus thermophilus (strain ATCC BAA-163 / DSM 7039 / HB27).